We begin with the raw amino-acid sequence, 237 residues long: NAD-dependent protein deacylase (237 aa).

The Deacetylase sirtuin-type domain maps to 1–235 (MRVVVLSGAG…PGLLQRLPAL (235 aa)). 8-28 (GAGISAESDVPTFRDDKNGLW) contributes to the NAD(+) binding site. Positions 53 and 56 each coordinate substrate. 86–89 (QNVD) is a binding site for NAD(+). The active-site Proton acceptor is the His-104. Positions 112, 115, 138, and 140 each coordinate Zn(2+). Residues 177-179 (GTS), 203-205 (NPE), and Ala-221 each bind NAD(+).

Belongs to the sirtuin family. Class III subfamily. Requires Zn(2+) as cofactor.

It localises to the cytoplasm. It catalyses the reaction N(6)-acetyl-L-lysyl-[protein] + NAD(+) + H2O = 2''-O-acetyl-ADP-D-ribose + nicotinamide + L-lysyl-[protein]. It carries out the reaction N(6)-succinyl-L-lysyl-[protein] + NAD(+) + H2O = 2''-O-succinyl-ADP-D-ribose + nicotinamide + L-lysyl-[protein]. In terms of biological role, NAD-dependent lysine deacetylase and desuccinylase that specifically removes acetyl and succinyl groups on target proteins. Modulates the activities of several proteins which are inactive in their acylated form. The polypeptide is NAD-dependent protein deacylase (Mycobacterium leprae (strain TN)).